A 237-amino-acid chain; its full sequence is dTDP-3-amino-3,4,6-trideoxy-alpha-D-glucopyranose N,N-dimethyltransferase (237 aa).

Substrate is bound by residues Tyr14 and Arg17. Residues Tyr21, Ala46, Glu67, 89 to 90, and Met105 each bind S-adenosyl-L-methionine; that span reads DM. Substrate contacts are provided by residues 145 to 147, Ser152, 165 to 169, and Arg229; these read TFA and RVSHS.

This sequence belongs to the methyltransferase TylM1/DesVI family. Homodimer.

It catalyses the reaction dTDP-3-amino-3,4,6-trideoxy-alpha-D-glucose + 2 S-adenosyl-L-methionine = dTDP-alpha-D-desosamine + 2 S-adenosyl-L-homocysteine + 2 H(+). It functions in the pathway antibiotic biosynthesis. S-adenosyl-L-methionine-dependent methyltransferase involved in the biosynthesis of desosamine, found in certain macrolide antibiotics such as erthyromycin, azithromycin, clarithromycin, and methymycin. Catalyzes the last step in the biosynthesis of dTDP-desosamine, i.e. the N,N-dimethylation of the 3-amino group of dTDP-3-amino-3,4,6-trideoxy-alpha-D-glucose. The protein is dTDP-3-amino-3,4,6-trideoxy-alpha-D-glucopyranose N,N-dimethyltransferase of Streptomyces venezuelae.